The chain runs to 443 residues: Serine--tRNA ligase (443 aa).

Thr250–Glu252 provides a ligand contact to L-serine. Position 281–283 (Arg281–Glu283) interacts with ATP. L-serine is bound at residue Glu304. Glu368 to Ser371 provides a ligand contact to ATP. Residue Ser403 coordinates L-serine.

It belongs to the class-II aminoacyl-tRNA synthetase family. Type-1 seryl-tRNA synthetase subfamily. Homodimer. The tRNA molecule binds across the dimer.

It localises to the cytoplasm. The catalysed reaction is tRNA(Ser) + L-serine + ATP = L-seryl-tRNA(Ser) + AMP + diphosphate + H(+). It carries out the reaction tRNA(Sec) + L-serine + ATP = L-seryl-tRNA(Sec) + AMP + diphosphate + H(+). Its pathway is aminoacyl-tRNA biosynthesis; selenocysteinyl-tRNA(Sec) biosynthesis; L-seryl-tRNA(Sec) from L-serine and tRNA(Sec): step 1/1. Catalyzes the attachment of serine to tRNA(Ser). Is also able to aminoacylate tRNA(Sec) with serine, to form the misacylated tRNA L-seryl-tRNA(Sec), which will be further converted into selenocysteinyl-tRNA(Sec). The protein is Serine--tRNA ligase of Variovorax paradoxus (strain S110).